The chain runs to 430 residues: Glutamate-1-semialdehyde 2,1-aminomutase (430 aa).

At K267 the chain carries N6-(pyridoxal phosphate)lysine.

The protein belongs to the class-III pyridoxal-phosphate-dependent aminotransferase family. HemL subfamily. Homodimer. Pyridoxal 5'-phosphate serves as cofactor.

It localises to the cytoplasm. The enzyme catalyses (S)-4-amino-5-oxopentanoate = 5-aminolevulinate. It participates in porphyrin-containing compound metabolism; protoporphyrin-IX biosynthesis; 5-aminolevulinate from L-glutamyl-tRNA(Glu): step 2/2. The protein is Glutamate-1-semialdehyde 2,1-aminomutase of Anaeromyxobacter sp. (strain K).